A 232-amino-acid polypeptide reads, in one-letter code: Anti-sigma-K factor RskA (232 aa).

The Cytoplasmic portion of the chain corresponds to 1 to 91 (MTEPTDFQLL…QSRRQPRWRT (91 aa)). Residues 92-112 (AVFASAAAIAVGLGAFGLGVL) form a helical membrane-spanning segment. Residues 113–232 (TRPSASPTVA…GTVLAELPLR (120 aa)) are Extracellular-facing.

It belongs to the anti-sigma-K factor family.

The protein resides in the cell membrane. Its function is as follows. An anti-sigma factor for extracytoplasmic function (ECF) sigma factor SigK. ECF sigma factors are held in an inactive form by an anti-sigma factor until released by regulated intramembrane proteolysis (RIP). RIP occurs when an extracytoplasmic signal triggers a concerted proteolytic cascade to transmit information and elicit cellular responses. The membrane-spanning regulatory substrate protein is first cut extracytoplasmically (site-1 protease, S1P), then within the membrane itself (site-2 protease, S2P, Rip1), while cytoplasmic proteases finish degrading the regulatory protein, liberating the sigma factor. This chain is Anti-sigma-K factor RskA (rskA), found in Mycobacterium ulcerans (strain Agy99).